The following is a 210-amino-acid chain: Uracil phosphoribosyltransferase (210 aa).

Residues arginine 78, arginine 103, and 130 to 138 each bind 5-phospho-alpha-D-ribose 1-diphosphate; that span reads DPMLATGGT. Uracil-binding positions include isoleucine 193 and 198 to 200; that span reads GDA. Residue aspartate 199 participates in 5-phospho-alpha-D-ribose 1-diphosphate binding.

Belongs to the UPRTase family. Mg(2+) is required as a cofactor.

The catalysed reaction is UMP + diphosphate = 5-phospho-alpha-D-ribose 1-diphosphate + uracil. It functions in the pathway pyrimidine metabolism; UMP biosynthesis via salvage pathway; UMP from uracil: step 1/1. Its activity is regulated as follows. Allosterically activated by GTP. Functionally, catalyzes the conversion of uracil and 5-phospho-alpha-D-ribose 1-diphosphate (PRPP) to UMP and diphosphate. The sequence is that of Uracil phosphoribosyltransferase from Stenotrophomonas maltophilia (strain K279a).